Here is a 316-residue protein sequence, read N- to C-terminus: 4-hydroxy-3-methylbut-2-enyl diphosphate reductase (316 aa).

C12 provides a ligand contact to [4Fe-4S] cluster. (2E)-4-hydroxy-3-methylbut-2-enyl diphosphate-binding residues include H41 and H74. Dimethylallyl diphosphate contacts are provided by H41 and H74. Isopentenyl diphosphate contacts are provided by H41 and H74. [4Fe-4S] cluster is bound at residue C96. H124 contributes to the (2E)-4-hydroxy-3-methylbut-2-enyl diphosphate binding site. H124 provides a ligand contact to dimethylallyl diphosphate. Isopentenyl diphosphate is bound at residue H124. E126 (proton donor) is an active-site residue. T169 serves as a coordination point for (2E)-4-hydroxy-3-methylbut-2-enyl diphosphate. C199 contacts [4Fe-4S] cluster. 4 residues coordinate (2E)-4-hydroxy-3-methylbut-2-enyl diphosphate: S227, S228, N229, and S271. Positions 227, 228, 229, and 271 each coordinate dimethylallyl diphosphate. 4 residues coordinate isopentenyl diphosphate: S227, S228, N229, and S271.

The protein belongs to the IspH family. The cofactor is [4Fe-4S] cluster.

It carries out the reaction isopentenyl diphosphate + 2 oxidized [2Fe-2S]-[ferredoxin] + H2O = (2E)-4-hydroxy-3-methylbut-2-enyl diphosphate + 2 reduced [2Fe-2S]-[ferredoxin] + 2 H(+). It catalyses the reaction dimethylallyl diphosphate + 2 oxidized [2Fe-2S]-[ferredoxin] + H2O = (2E)-4-hydroxy-3-methylbut-2-enyl diphosphate + 2 reduced [2Fe-2S]-[ferredoxin] + 2 H(+). It participates in isoprenoid biosynthesis; dimethylallyl diphosphate biosynthesis; dimethylallyl diphosphate from (2E)-4-hydroxy-3-methylbutenyl diphosphate: step 1/1. Its pathway is isoprenoid biosynthesis; isopentenyl diphosphate biosynthesis via DXP pathway; isopentenyl diphosphate from 1-deoxy-D-xylulose 5-phosphate: step 6/6. Catalyzes the conversion of 1-hydroxy-2-methyl-2-(E)-butenyl 4-diphosphate (HMBPP) into a mixture of isopentenyl diphosphate (IPP) and dimethylallyl diphosphate (DMAPP). Acts in the terminal step of the DOXP/MEP pathway for isoprenoid precursor biosynthesis. This Vibrio cholerae serotype O1 (strain ATCC 39315 / El Tor Inaba N16961) protein is 4-hydroxy-3-methylbut-2-enyl diphosphate reductase.